Consider the following 116-residue polypeptide: Ribosome-binding factor A (116 aa).

It belongs to the RbfA family. In terms of assembly, monomer. Binds 30S ribosomal subunits, but not 50S ribosomal subunits or 70S ribosomes.

It is found in the cytoplasm. In terms of biological role, one of several proteins that assist in the late maturation steps of the functional core of the 30S ribosomal subunit. Associates with free 30S ribosomal subunits (but not with 30S subunits that are part of 70S ribosomes or polysomes). Required for efficient processing of 16S rRNA. May interact with the 5'-terminal helix region of 16S rRNA. The protein is Ribosome-binding factor A of Buchnera aphidicola subsp. Cinara cedri (strain Cc).